The sequence spans 205 residues: GTP cyclohydrolase-2 (205 aa).

49 to 53 (RLHSE) contacts GTP. Residues Cys54, Cys65, and Cys67 each contribute to the Zn(2+) site. Residues Gln70, 92 to 94 (EGR), and Thr114 each bind GTP. The active-site Proton acceptor is the Asp126. Arg128 functions as the Nucleophile in the catalytic mechanism. Thr149 and Lys154 together coordinate GTP.

The protein belongs to the GTP cyclohydrolase II family. It depends on Zn(2+) as a cofactor.

It catalyses the reaction GTP + 4 H2O = 2,5-diamino-6-hydroxy-4-(5-phosphoribosylamino)-pyrimidine + formate + 2 phosphate + 3 H(+). Its pathway is cofactor biosynthesis; riboflavin biosynthesis; 5-amino-6-(D-ribitylamino)uracil from GTP: step 1/4. Catalyzes the conversion of GTP to 2,5-diamino-6-ribosylamino-4(3H)-pyrimidinone 5'-phosphate (DARP), formate and pyrophosphate. The polypeptide is GTP cyclohydrolase-2 (Pseudomonas putida (strain ATCC 700007 / DSM 6899 / JCM 31910 / BCRC 17059 / LMG 24140 / F1)).